The following is a 331-amino-acid chain: 5'-AMP-activated protein kinase subunit gamma-1 (331 aa).

Polar residues predominate over residues 1 to 12; sequence METVISSDSSPA. Positions 1-26 are disordered; that stretch reads METVISSDSSPAVENEHPQETPESNN. CBS domains lie at 43–103, 125–187, and 198–260; these read PTSS…KSAL, SFKP…PKPE, and IGTY…NLDV. ADP is bound by residues Arg70, 85 to 90, Val130, 151 to 152, and Lys170; these read MLTITD and HR. AMP contacts are provided by residues Arg70, 85-90, Val130, His151, 151-152, Lys170, Thr200, Ala205, 226-227, and 242-245; these read MLTITD, HR, SA, and SKFD. ATP is bound by residues Arg70, 85 to 90, Val130, 151 to 152, Arg152, and Lys170; these read MLTITD and HR. Positions 138–159 match the AMPK pseudosubstrate motif; that stretch reads LFDAVSSLIRNKIHRLPVIDPE. Residue 242 to 245 coordinates ADP; that stretch reads SKFD. 242–245 provides a ligand contact to ATP; sequence SKFD. Position 261 is a phosphoserine; by ULK1 (Ser261). Thr263 carries the phosphothreonine; by ULK1 modification. Residue Arg269 coordinates ADP. Residue Arg269 coordinates AMP. Position 269 (Arg269) interacts with ATP. Ser270 is modified (phosphoserine; by ULK1). Positions 272–329 constitute a CBS 4 domain; that stretch reads YFEGVLKCYLHETLETIINRLVEAEVHRLVVVDENDVVKGIVSLSDILQALVLTGGEK. Residues Leu277 and 298–299 contribute to the ADP site; that span reads HR. AMP-binding positions include Leu277, His298, 298–299, and 314–317; these read HR and SLSD. Residues Leu277 and 298 to 299 each bind ATP; that span reads HR.

This sequence belongs to the 5'-AMP-activated protein kinase gamma subunit family. In terms of assembly, AMPK is a heterotrimer of an alpha catalytic subunit (PRKAA1 or PRKAA2), a beta (PRKAB1 or PRKAB2) and a gamma non-catalytic subunits (PRKAG1, PRKAG2 or PRKAG3). Interacts with FNIP1 and FNIP2. In terms of processing, phosphorylated by ULK1 and ULK2; leading to negatively regulate AMPK activity and suggesting the existence of a regulatory feedback loop between ULK1, ULK2 and AMPK. Glycosylated; O-GlcNAcylated by OGT, promoting the AMP-activated protein kinase (AMPK) activity.

In terms of biological role, AMP/ATP-binding subunit of AMP-activated protein kinase (AMPK), an energy sensor protein kinase that plays a key role in regulating cellular energy metabolism. In response to reduction of intracellular ATP levels, AMPK activates energy-producing pathways and inhibits energy-consuming processes: inhibits protein, carbohydrate and lipid biosynthesis, as well as cell growth and proliferation. AMPK acts via direct phosphorylation of metabolic enzymes, and by longer-term effects via phosphorylation of transcription regulators. Also acts as a regulator of cellular polarity by remodeling the actin cytoskeleton; probably by indirectly activating myosin. Gamma non-catalytic subunit mediates binding to AMP, ADP and ATP, leading to activate or inhibit AMPK: AMP-binding results in allosteric activation of alpha catalytic subunit (PRKAA1 or PRKAA2) both by inducing phosphorylation and preventing dephosphorylation of catalytic subunits. ADP also stimulates phosphorylation, without stimulating already phosphorylated catalytic subunit. ATP promotes dephosphorylation of catalytic subunit, rendering the AMPK enzyme inactive. The protein is 5'-AMP-activated protein kinase subunit gamma-1 (PRKAG1) of Homo sapiens (Human).